Reading from the N-terminus, the 293-residue chain is Elongation factor Ts (293 aa).

The segment at 80–83 (TDFV) is involved in Mg(2+) ion dislocation from EF-Tu.

This sequence belongs to the EF-Ts family.

It is found in the cytoplasm. Functionally, associates with the EF-Tu.GDP complex and induces the exchange of GDP to GTP. It remains bound to the aminoacyl-tRNA.EF-Tu.GTP complex up to the GTP hydrolysis stage on the ribosome. The sequence is that of Elongation factor Ts from Aeromonas hydrophila subsp. hydrophila (strain ATCC 7966 / DSM 30187 / BCRC 13018 / CCUG 14551 / JCM 1027 / KCTC 2358 / NCIMB 9240 / NCTC 8049).